The primary structure comprises 205 residues: Urease accessory protein UreG (205 aa).

10 to 17 (GPVGAGKT) provides a ligand contact to GTP.

Belongs to the SIMIBI class G3E GTPase family. UreG subfamily. As to quaternary structure, homodimer. UreD, UreF and UreG form a complex that acts as a GTP-hydrolysis-dependent molecular chaperone, activating the urease apoprotein by helping to assemble the nickel containing metallocenter of UreC. The UreE protein probably delivers the nickel.

It is found in the cytoplasm. Facilitates the functional incorporation of the urease nickel metallocenter. This process requires GTP hydrolysis, probably effectuated by UreG. The protein is Urease accessory protein UreG of Corynebacterium glutamicum (strain R).